The following is a 168-amino-acid chain: Sensor histidine kinase component HK1 (168 aa).

The 141-residue stretch at 1-141 (MPITPLLHES…ELRITLPTPR (141 aa)) folds into the Histidine kinase; second part domain. A disordered region spans residues 137-168 (LPTPRPPFHEELPRITSSDTKDPNREHDTSDQ). Residues 143 to 168 (PFHEELPRITSSDTKDPNREHDTSDQ) show a composition bias toward basic and acidic residues.

Interacts with HK2.

It carries out the reaction ATP + protein L-histidine = ADP + protein N-phospho-L-histidine.. Member of the three-protein two-component system HK1/HK2/TcrA. Kinase that binds ATP and catalyzes the transfer of a phosphoryl group from ATP to HK2. This is Sensor histidine kinase component HK1 from Mycobacterium tuberculosis (strain ATCC 25618 / H37Rv).